Here is a 536-residue protein sequence, read N- to C-terminus: Zinc finger protein 623 (536 aa).

The tract at residues 57–77 (GELLGNPEGQSLGSSPSQDRG) is disordered. Over residues 64 to 74 (EGQSLGSSPSQ) the composition is skewed to polar residues. 13 C2H2-type zinc fingers span residues 123–145 (NPCD…RISH), 151–173 (YTCD…QRIH), 179–201 (YVCN…QRVH), 207–229 (FKCA…QRVH), 235–257 (FECK…QRIH), 263–285 (YECN…YQIH), 291–313 (YECK…QRIH), 319–341 (FECN…QRIH), 347–369 (YVCN…QRIH), 375–397 (YECN…QKIH), 403–425 (YECK…QKIH), 431–453 (FECK…QIIH), and 459–481 (YVCS…QKIH). K445 participates in a covalent cross-link: Glycyl lysine isopeptide (Lys-Gly) (interchain with G-Cter in SUMO2). Residues 513–536 (LSLSKAPIHLGERSVDKGEHTGNL) are disordered. Residues 522–536 (LGERSVDKGEHTGNL) show a composition bias toward basic and acidic residues.

It belongs to the krueppel C2H2-type zinc-finger protein family.

The protein resides in the nucleus. Functionally, may be involved in transcriptional regulation. This is Zinc finger protein 623 (ZNF623) from Homo sapiens (Human).